The sequence spans 159 residues: Phosphopantetheine adenylyltransferase (159 aa).

Position 10 (threonine 10) interacts with substrate. Residues 10 to 11 and histidine 18 contribute to the ATP site; that span reads TF. Residues lysine 42, methionine 74, and arginine 88 each contribute to the substrate site. ATP is bound by residues 89 to 91, glutamate 99, and 124 to 130; these read GLR and WSFISSS.

This sequence belongs to the bacterial CoaD family. In terms of assembly, homohexamer. The cofactor is Mg(2+).

It is found in the cytoplasm. It catalyses the reaction (R)-4'-phosphopantetheine + ATP + H(+) = 3'-dephospho-CoA + diphosphate. Its pathway is cofactor biosynthesis; coenzyme A biosynthesis; CoA from (R)-pantothenate: step 4/5. Functionally, reversibly transfers an adenylyl group from ATP to 4'-phosphopantetheine, yielding dephospho-CoA (dPCoA) and pyrophosphate. This Yersinia pseudotuberculosis serotype O:3 (strain YPIII) protein is Phosphopantetheine adenylyltransferase.